The chain runs to 299 residues: Protease HtpX homolog (299 aa).

The next 2 helical transmembrane spans lie at Ile15–Phe35 and Gly39–Phe59. His143 lines the Zn(2+) pocket. The active site involves Glu144. His147 provides a ligand contact to Zn(2+). A run of 2 helical transmembrane segments spans residues Ile158–Trp178 and Ile198–Val218. Glu227 lines the Zn(2+) pocket.

The protein belongs to the peptidase M48B family. Zn(2+) serves as cofactor.

It is found in the cell membrane. The chain is Protease HtpX homolog from Streptococcus pneumoniae (strain Hungary19A-6).